The sequence spans 466 residues: Hepatocyte nuclear factor 3-alpha (466 aa).

Residues 169-260 (AKPPYSYISL…GNMFENGCYL (92 aa)) constitute a DNA-binding region (fork-head). The interval 251–288 (GNMFENGCYLRRQKRFKCEKQPGAGGGSGGGGSKGVPE) is essential for DNA binding. The interval 269-358 (EKQPGAGGGS…ASSSAPPISS (90 aa)) is disordered. A compositionally biased stretch (gly residues) spans 273–284 (GAGGGSGGGGSK). A phosphoserine mark is found at S303 and S327. Composition is skewed to low complexity over residues 318–328 (GAPAPGPAASP) and 344–358 (ELKSPASSSAPPISS).

Binds DNA as a monomer. Interacts with FOXA2. Interacts with NKX2-1. Interacts with HDAC7. Interacts with the histone H3-H4 heterodimer. Associates with nucleosomes containing histone H2A. Interacts with AR. Interacts with NR0B2. In terms of tissue distribution, liver.

The protein resides in the nucleus. Transcription factor that is involved in embryonic development, establishment of tissue-specific gene expression and regulation of gene expression in differentiated tissues. Is thought to act as a 'pioneer' factor opening the compacted chromatin for other proteins through interactions with nucleosomal core histones and thereby replacing linker histones at target enhancer and/or promoter sites. Binds DNA with the consensus sequence 5'-[AC]A[AT]T[AG]TT[GT][AG][CT]T[CT]-3'. Proposed to play a role in translating the epigenetic signatures into cell type-specific enhancer-driven transcriptional programs. Involved in glucose homeostasis; activates the GCG promoter. Involved in the development of multiple endoderm-derived organ systems such as the liver, pancreas, lungs and prostate; FOXA1 and FOXA2 seem to have at least in part redundant roles. Modulates the transcriptional activity of nuclear hormone receptors. Is required for maximal gene activation mediated by AR in the prostate. Negatively regulates AR transactivation via competition with coactivators such as NCOA2. Is involved in ESR1-mediated transcription. Involved in regulation of apoptosis. Involved in cell cycle regulation. Originally described as a transcription activator for a number of liver genes such as AFP, albumin, tyrosine aminotransferase, PEPCK, etc. Interacts with the cis-acting regulatory regions of these genes. The protein is Hepatocyte nuclear factor 3-alpha (Foxa1) of Rattus norvegicus (Rat).